The sequence spans 266 residues: Glucose 1-dehydrogenase (266 aa).

15-39 contacts NADP(+); it reads LVTGASQGIGEATALRFAEEGAQVA. Position 149 (Ser149) interacts with substrate. The active-site Proton acceptor is the Tyr162.

The protein belongs to the short-chain dehydrogenases/reductases (SDR) family. Homotetramer or homooctamer.

The catalysed reaction is D-glucose + NADP(+) = D-glucono-1,5-lactone + NADPH + H(+). In terms of biological role, oxidizes both D-glucose and D-mannose, but is 15 times more catalytically efficient with mannose. Strictly dependent on NADP. The polypeptide is Glucose 1-dehydrogenase (Gluconobacter oxydans (strain 621H) (Gluconobacter suboxydans)).